Consider the following 59-residue polypeptide: Aedesin (59 aa).

An N-terminal signal peptide occupies residues 1–23; the sequence is MNFTKLFAIVLLAALVLLGQTEA.

Belongs to the cecropin family. As to expression, salivary gland (at protein level).

The protein resides in the secreted. Its function is as follows. Antimicrobial peptide. Exhibits antibacterial activity against Gram-negative bacteria, such as Escherichia coli, Pseudomonas aeruginosa, Acinetobacter baumannii and Klebsiella pneumoniae. Shows no antibacterial effects against Gram-positive bacteria, such as Staphylococcus aureus, Enterococcus faecalis and Enterococcus faecium. Exhibits antiviral activity against all four dengue virus serotypes and chikungunya virus. Exhibits leishmanicidal activity. Partially neutralizes lipopolysaccharides (LPS). Exhibits anti-inflammatory properties: inhibits LPS-induced iNOS/NOS2 transcription, nitric oxide (NO) and pro-inflammatory cytokine production in mouse macrophages and human peripheral blood mononuclear cells (PBMCs); inhibits LPS-induced activation of MAPK and NF-kappa-B signaling pathways in mouse macrophages. The protein is Aedesin of Aedes aegypti (Yellowfever mosquito).